Consider the following 217-residue polypeptide: Adenylate kinase (217 aa).

10 to 15 (GAGKGT) serves as a coordination point for ATP. The NMP stretch occupies residues 30–59 (STGDMLRAAVKAGTPLGLQAKDIMASGGLV). AMP contacts are provided by residues Thr-31, Arg-36, 57 to 59 (GLV), 85 to 88 (GFPR), and Gln-92. The segment at 122 to 159 (GRRVHEASGRVYHIIHNAPRVEGHDDVTGEPLVQRPDD) is LID. ATP contacts are provided by residues Arg-123 and 132-133 (VY). Positions 156 and 167 each coordinate AMP. Gly-203 lines the ATP pocket.

It belongs to the adenylate kinase family. Monomer.

The protein localises to the cytoplasm. The enzyme catalyses AMP + ATP = 2 ADP. The protein operates within purine metabolism; AMP biosynthesis via salvage pathway; AMP from ADP: step 1/1. Its function is as follows. Catalyzes the reversible transfer of the terminal phosphate group between ATP and AMP. Plays an important role in cellular energy homeostasis and in adenine nucleotide metabolism. The protein is Adenylate kinase of Cellvibrio japonicus (strain Ueda107) (Pseudomonas fluorescens subsp. cellulosa).